Consider the following 167-residue polypeptide: CKLF-like MARVEL transmembrane domain-containing protein 7 (167 aa).

Positions 32–158 constitute an MARVEL domain; sequence YPLTHGALFK…SLWLSYKITC (127 aa). The next 4 helical transmembrane spans lie at 35-55, 69-89, 102-122, and 132-152; these read THGA…FICV, FEVV…VHLF, LSEL…SIVI, and LVAG…SLWL.

This sequence belongs to the chemokine-like factor family.

Its subcellular location is the membrane. The protein is CKLF-like MARVEL transmembrane domain-containing protein 7 (Cmtm7) of Mus musculus (Mouse).